A 25-amino-acid polypeptide reads, in one-letter code: Bioremediase (25 aa).

The 25-residue stretch at 1 to 25 (DFPIANGERQSPVDIDTKAVVQDPA) folds into the Alpha-carbonic anhydrase domain. A disordered region spans residues 1–25 (DFPIANGERQSPVDIDTKAVVQDPA).

Belongs to the alpha-carbonic anhydrase family. The cofactor is Zn(2+).

In terms of biological role, releases silica from silica-rich substances. The polypeptide is Bioremediase (Thermoanaerobacter sp).